A 586-amino-acid chain; its full sequence is Arginine--tRNA ligase (586 aa).

The 'HIGH' region motif lies at 131–141 (ANPTGPMHVGH).

This sequence belongs to the class-I aminoacyl-tRNA synthetase family. As to quaternary structure, monomer.

The protein resides in the cytoplasm. It carries out the reaction tRNA(Arg) + L-arginine + ATP = L-arginyl-tRNA(Arg) + AMP + diphosphate. The protein is Arginine--tRNA ligase of Rhizobium rhizogenes (strain K84 / ATCC BAA-868) (Agrobacterium radiobacter).